We begin with the raw amino-acid sequence, 187 residues long: Threonylcarbamoyl-AMP synthase (187 aa).

Residues 4–187 (TLTLSEAVTA…DARSGHILRL (184 aa)) enclose the YrdC-like domain.

The protein belongs to the SUA5 family. TsaC subfamily.

It is found in the cytoplasm. It catalyses the reaction L-threonine + hydrogencarbonate + ATP = L-threonylcarbamoyladenylate + diphosphate + H2O. Functionally, required for the formation of a threonylcarbamoyl group on adenosine at position 37 (t(6)A37) in tRNAs that read codons beginning with adenine. Catalyzes the conversion of L-threonine, HCO(3)(-)/CO(2) and ATP to give threonylcarbamoyl-AMP (TC-AMP) as the acyladenylate intermediate, with the release of diphosphate. The sequence is that of Threonylcarbamoyl-AMP synthase from Xylella fastidiosa (strain 9a5c).